The sequence spans 56 residues: Small ribosomal subunit protein uS14 (56 aa).

Cys-21, Cys-24, Cys-39, and Cys-42 together coordinate Zn(2+).

This sequence belongs to the universal ribosomal protein uS14 family. As to quaternary structure, component of the 40S small ribosomal subunit. It depends on Zn(2+) as a cofactor.

It localises to the cytoplasm. The protein resides in the cytosol. The protein localises to the rough endoplasmic reticulum. This is Small ribosomal subunit protein uS14 (RpS29) from Culex quinquefasciatus (Southern house mosquito).